Reading from the N-terminus, the 147-residue chain is Deoxyuridine 5'-triphosphate nucleotidohydrolase (147 aa).

Substrate-binding positions include Arg67–Gly69, Asn80, and Thr84–Asp86.

This sequence belongs to the dUTPase family. Mg(2+) serves as cofactor.

It catalyses the reaction dUTP + H2O = dUMP + diphosphate + H(+). Its pathway is pyrimidine metabolism; dUMP biosynthesis; dUMP from dCTP (dUTP route): step 2/2. This enzyme is involved in nucleotide metabolism: it produces dUMP, the immediate precursor of thymidine nucleotides and it decreases the intracellular concentration of dUTP so that uracil cannot be incorporated into DNA. The chain is Deoxyuridine 5'-triphosphate nucleotidohydrolase from Anaeromyxobacter sp. (strain Fw109-5).